A 265-amino-acid polypeptide reads, in one-letter code: Phosphonates import ATP-binding protein PhnC (265 aa).

An ABC transporter domain is found at 18-262; the sequence is LVVEHLRKEY…HLKQIYGGEE (245 aa). 51–58 is a binding site for ATP; the sequence is GPSGTGKS.

This sequence belongs to the ABC transporter superfamily. Phosphonates importer (TC 3.A.1.9.1) family. The complex is composed of two ATP-binding proteins (PhnC), two transmembrane proteins (PhnE) and a solute-binding protein (PhnD).

It is found in the cell inner membrane. The catalysed reaction is phosphonate(out) + ATP + H2O = phosphonate(in) + ADP + phosphate + H(+). Functionally, part of the ABC transporter complex PhnCDE involved in phosphonates import. Responsible for energy coupling to the transport system. The protein is Phosphonates import ATP-binding protein PhnC of Nitratidesulfovibrio vulgaris (strain ATCC 29579 / DSM 644 / CCUG 34227 / NCIMB 8303 / VKM B-1760 / Hildenborough) (Desulfovibrio vulgaris).